Reading from the N-terminus, the 271-residue chain is Nus factor SuhB (271 aa).

Residues Glu67, Asp86, and Leu88 each coordinate Mg(2+). A substrate-binding site is contributed by Glu67. Substrate is bound by residues 88 to 91 (LDGT), Arg187, and Asp216.

It belongs to the inositol monophosphatase superfamily. In terms of assembly, homodimer. The rRNA transcription and antitermination complex (rrnTAC) consists of RNA polymerase (RNAP), NusA, NusB, NusE (rpsJ), NusG, SubB, ribosomal protein S4, DNA and precursor rRNA; S4 is more flexible than other subunits. Interacts with the ribosome and with RNA polymerase. The cofactor is Mg(2+).

It is found in the cytoplasm. It catalyses the reaction a myo-inositol phosphate + H2O = myo-inositol + phosphate. Functionally, part of the processive rRNA transcription and antitermination complex (rrnTAC). The complex forms an RNA-chaperone ring around the RNA exit tunnel of RNA polymerase (RNAP). It supports rapid transcription and antitermination of rRNA operons, cotranscriptional rRNA folding, and annealing of distal rRNA regions to allow correct ribosome biogenesis. This subunit may play a central role in organizing the structure. A ribosome-associated protein, deletion of which alters the expression of 494 genes, suggesting a role in global gene regulation. Involved in control of pathogenesis-related genes. Required for the activation of virulence factors associated with acute infections (type 3 secretion system, T3SS) while suppressing virulence factors associated with chronic infections (biofilm formation and type 6 secretion system, T6SS). It probably acts at a post-transcriptional level. The polypeptide is Nus factor SuhB (Pseudomonas aeruginosa (strain ATCC 15692 / DSM 22644 / CIP 104116 / JCM 14847 / LMG 12228 / 1C / PRS 101 / PAO1)).